A 676-amino-acid polypeptide reads, in one-letter code: Solute carrier family 26 member 10 (676 aa).

The segment at 1–24 (MSGPLASGTCSDPEEVSDLKSPLS) is disordered. 11 helical membrane passes run 101-121 (AVAG…FALL), 124-144 (VPPV…SLLG), 149-165 (LSTG…GSVV), 190-210 (VGAA…MFVL), 226-246 (ALTS…LLGL), 267-287 (ALSQ…VLLV), 300-320 (LLTP…LCFT), 353-373 (ILAD…SLAS), 398-418 (ISSL…SLLV), 426-446 (LAGL…RPFF), and 487-507 (IVTW…VGVV). Positions 539 to 660 (ESRKLLQVPG…VSVQDAAAHA (122 aa)) constitute an STAS domain.

The protein belongs to the SLC26A/SulP transporter (TC 2.A.53) family.

It localises to the membrane. Chloride/bicarbonate exchanger. This chain is Solute carrier family 26 member 10 (Slc26a10), found in Mus musculus (Mouse).